The following is a 288-amino-acid chain: Diaminopimelate epimerase (288 aa).

Substrate-binding residues include asparagine 14 and asparagine 67. Cysteine 76 serves as the catalytic Proton donor. Substrate is bound by residues 77–78, asparagine 166, asparagine 199, and 217–218; these read GN and ER. The active-site Proton acceptor is cysteine 226. 227–228 serves as a coordination point for substrate; it reads GT.

It belongs to the diaminopimelate epimerase family. As to quaternary structure, homodimer.

It localises to the cytoplasm. The catalysed reaction is (2S,6S)-2,6-diaminopimelate = meso-2,6-diaminopimelate. It functions in the pathway amino-acid biosynthesis; L-lysine biosynthesis via DAP pathway; DL-2,6-diaminopimelate from LL-2,6-diaminopimelate: step 1/1. Its function is as follows. Catalyzes the stereoinversion of LL-2,6-diaminopimelate (L,L-DAP) to meso-diaminopimelate (meso-DAP), a precursor of L-lysine and an essential component of the bacterial peptidoglycan. This chain is Diaminopimelate epimerase, found in Bacillus cereus (strain AH820).